Here is a 2162-residue protein sequence, read N- to C-terminus: Calpain-type cysteine protease ADL1 (2162 aa).

Positions methionine 1–alanine 33 are cleaved as a signal peptide. Over valine 34–alanine 70 the chain is Extracellular. Residues tryptophan 71–leucine 91 traverse the membrane as a helical segment. Topologically, residues leucine 92 to asparagine 95 are cytoplasmic. The chain crosses the membrane as a helical span at residues isoleucine 96 to methionine 116. Over leucine 117–lysine 127 the chain is Extracellular. The chain crosses the membrane as a helical span at residues alanine 128 to valine 148. Over tyrosine 149–glycine 164 the chain is Cytoplasmic. The chain crosses the membrane as a helical span at residues phenylalanine 165–leucine 185. At phenylalanine 186–histidine 236 the chain is on the extracellular side. The helical transmembrane segment at leucine 237 to leucine 257 threads the bilayer. Residues threonine 258 to tryptophan 264 lie on the Cytoplasmic side of the membrane. The chain crosses the membrane as a helical span at residues leucine 265–phenylalanine 285. The Extracellular portion of the chain corresponds to arginine 286–methionine 294. A helical transmembrane segment spans residues isoleucine 295–tryptophan 315. At tyrosine 316–cysteine 320 the chain is on the cytoplasmic side. The chain crosses the membrane as a helical span at residues isoleucine 321 to isoleucine 341. The Extracellular segment spans residues serine 342–proline 626. Residues lysine 366–arginine 403 form a disordered region. Positions serine 370–serine 381 are enriched in low complexity. A helical transmembrane segment spans residues isoleucine 627–histidine 647. Residues arginine 648 to glutamate 663 are Cytoplasmic-facing. The chain crosses the membrane as a helical span at residues phenylalanine 664–serine 684. The Extracellular segment spans residues leucine 685–arginine 697. A helical transmembrane segment spans residues lysine 698–serine 718. Residues lysine 719–valine 722 lie on the Cytoplasmic side of the membrane. The chain crosses the membrane as a helical span at residues isoleucine 723–isoleucine 743. Residues tryptophan 744–arginine 773 are Extracellular-facing. Residues alanine 774–valine 794 traverse the membrane as a helical segment. At serine 795–glycine 825 the chain is on the cytoplasmic side. A helical transmembrane segment spans residues tryptophan 826 to phenylalanine 846. Topologically, residues alanine 847–alanine 856 are extracellular. Residues isoleucine 857–valine 877 traverse the membrane as a helical segment. At valine 878–aspartate 890 the chain is on the cytoplasmic side. Residues phenylalanine 891–methionine 911 traverse the membrane as a helical segment. The Extracellular segment spans residues tyrosine 912–glycine 924. A helical transmembrane segment spans residues valine 925–valine 945. At threonine 946 to proline 949 the chain is on the cytoplasmic side. A helical transmembrane segment spans residues tryptophan 950–isoleucine 970. Residues histidine 971–glutamine 984 are Extracellular-facing. Residues methionine 985–phenylalanine 1005 form a helical membrane-spanning segment. Residues glutamine 1006 to serine 1019 lie on the Cytoplasmic side of the membrane. Residues phenylalanine 1020–tyrosine 1040 form a helical membrane-spanning segment. Topologically, residues serine 1041 to alanine 1063 are extracellular. The helical transmembrane segment at phenylalanine 1064 to isoleucine 1084 threads the bilayer. Residues leucine 1085 to valine 2162 are Cytoplasmic-facing. Residues serine 1372 and serine 1377 each carry the phosphoserine modification. A Calpain catalytic 1 domain is found at threonine 1418 to aspartate 1611. Serine 1668 is modified (phosphoserine). The region spanning asparagine 1706–tyrosine 2008 is the Calpain catalytic 2 domain. Active-site residues include cysteine 1772, histidine 1930, and asparagine 1950.

Belongs to the peptidase C2 family. In terms of processing, autocatalytic proteolytic cleavage leading to the production of mainly cytoplasmic localized subproducts of about 85 and 120 kDa. As to expression, ubiquitously expressed with higher levels in embryos, vasculatures, leaf primordia, leaf margins, and shoot apical meristem (SAM).

Its subcellular location is the endoplasmic reticulum membrane. The protein resides in the cytoplasm. It localises to the cell membrane. It is found in the endosome membrane. In terms of biological role, essential protease involved in epiderm development. Required for aleurone cell development in the endosperm probably by maintaining and restricting the aleurone and embryonic epidermal L1 cell-layer fates as well as meristems organization. Involved in the maintenance of adaxial/abaxial axis information in developing leaves, probably by regulating cell proliferation and expansion. Does not need calcium ions to be active. The chain is Calpain-type cysteine protease ADL1 (ADL1) from Oryza sativa subsp. japonica (Rice).